Here is a 172-residue protein sequence, read N- to C-terminus: NADH-ubiquinone oxidoreductase chain 6 (172 aa).

Helical transmembrane passes span methionine 1–leucine 21, isoleucine 26–glycine 48, glycine 52–alanine 74, tryptophan 86–phenylalanine 106, and cysteine 147–isoleucine 167.

Belongs to the complex I subunit 6 family. In terms of assembly, core subunit of respiratory chain NADH dehydrogenase (Complex I) which is composed of 45 different subunits.

It is found in the mitochondrion inner membrane. It catalyses the reaction a ubiquinone + NADH + 5 H(+)(in) = a ubiquinol + NAD(+) + 4 H(+)(out). Core subunit of the mitochondrial membrane respiratory chain NADH dehydrogenase (Complex I) which catalyzes electron transfer from NADH through the respiratory chain, using ubiquinone as an electron acceptor. Essential for the catalytic activity and assembly of complex I. In Rattus norvegicus (Rat), this protein is NADH-ubiquinone oxidoreductase chain 6.